A 424-amino-acid polypeptide reads, in one-letter code: GTPase Obg (424 aa).

The Obg domain maps to 1–160; it reads MFDRVEIRIK…YELILELKLI (160 aa). An OBG-type G domain is found at 161-328; the sequence is ADVAIIGYPN…LLDKVAEKLA (168 aa). Residues 167–174, 192–196, 213–216, 280–283, and 309–311 each bind GTP; these read GYPNVGKS, FTTLS, EVPG, NKID, and SAL. Mg(2+) is bound by residues serine 174 and threonine 194. Positions 349-424 constitute an OCT domain; it reads PAPKGKMGFH…IITGRLEWYL (76 aa).

The protein belongs to the TRAFAC class OBG-HflX-like GTPase superfamily. OBG GTPase family. In terms of assembly, monomer. The cofactor is Mg(2+).

The protein localises to the cytoplasm. An essential GTPase which binds GTP, GDP and possibly (p)ppGpp with moderate affinity, with high nucleotide exchange rates and a fairly low GTP hydrolysis rate. Plays a role in control of the cell cycle, stress response, ribosome biogenesis and in those bacteria that undergo differentiation, in morphogenesis control. The sequence is that of GTPase Obg from Dehalococcoides mccartyi (strain ATCC BAA-2266 / KCTC 15142 / 195) (Dehalococcoides ethenogenes (strain 195)).